The primary structure comprises 182 residues: Adenine phosphoribosyltransferase (182 aa).

It belongs to the purine/pyrimidine phosphoribosyltransferase family. As to quaternary structure, homodimer.

The protein resides in the cytoplasm. The enzyme catalyses AMP + diphosphate = 5-phospho-alpha-D-ribose 1-diphosphate + adenine. It functions in the pathway purine metabolism; AMP biosynthesis via salvage pathway; AMP from adenine: step 1/1. Functionally, catalyzes a salvage reaction resulting in the formation of AMP, that is energically less costly than de novo synthesis. This is Adenine phosphoribosyltransferase from Streptomyces coelicolor (strain ATCC BAA-471 / A3(2) / M145).